Consider the following 431-residue polypeptide: Enolase (431 aa).

Residue Gln-166 participates in (2R)-2-phosphoglycerate binding. The active-site Proton donor is Glu-208. Residues Asp-245, Glu-288, and Asp-315 each contribute to the Mg(2+) site. (2R)-2-phosphoglycerate is bound by residues Lys-340, Arg-369, Ser-370, and Lys-391. Lys-340 (proton acceptor) is an active-site residue.

The protein belongs to the enolase family. Mg(2+) is required as a cofactor.

Its subcellular location is the cytoplasm. The protein localises to the secreted. The protein resides in the cell surface. The catalysed reaction is (2R)-2-phosphoglycerate = phosphoenolpyruvate + H2O. It functions in the pathway carbohydrate degradation; glycolysis; pyruvate from D-glyceraldehyde 3-phosphate: step 4/5. Its function is as follows. Catalyzes the reversible conversion of 2-phosphoglycerate (2-PG) into phosphoenolpyruvate (PEP). It is essential for the degradation of carbohydrates via glycolysis. This chain is Enolase, found in Clostridium perfringens (strain 13 / Type A).